The chain runs to 155 residues: MNATHCILALQLFLMAVSGCYCHGTVIESLESLNNYFNSSGIDVEEKSLFLDIWRNWQKDGDMKILQSQIISFYLRLFEVLKDNQAISNNISVIESHLITTFFSNSKAKKDAFMSIAKFEVNNPQVQRQAFNELIRVVHQLLPESSLRKRKRSRC.

The signal sequence occupies residues 1–22; the sequence is MNATHCILALQLFLMAVSGCYC. N-linked (GlcNAc...) asparagine glycans are attached at residues asparagine 38 and asparagine 90.

Belongs to the type II (or gamma) interferon family. In terms of assembly, homodimer. Interacts with IFNGR1 (via extracellular domain); this interaction promotes IFNGR1 dimerization. In terms of tissue distribution, released primarily from activated T lymphocytes.

The protein localises to the secreted. Its function is as follows. Type II interferon produced by immune cells such as T-cells and NK cells that plays crucial roles in antimicrobial, antiviral, and antitumor responses by activating effector immune cells and enhancing antigen presentation. Primarily signals through the JAK-STAT pathway after interaction with its receptor IFNGR1 to affect gene regulation. Upon IFNG binding, IFNGR1 intracellular domain opens out to allow association of downstream signaling components JAK2, JAK1 and STAT1, leading to STAT1 activation, nuclear translocation and transcription of IFNG-regulated genes. Many of the induced genes are transcription factors such as IRF1 that are able to further drive regulation of a next wave of transcription. Plays a role in class I antigen presentation pathway by inducing a replacement of catalytic proteasome subunits with immunoproteasome subunits. In turn, increases the quantity, quality, and repertoire of peptides for class I MHC loading. Increases the efficiency of peptide generation also by inducing the expression of activator PA28 that associates with the proteasome and alters its proteolytic cleavage preference. Up-regulates as well MHC II complexes on the cell surface by promoting expression of several key molecules such as cathepsins B/CTSB, H/CTSH, and L/CTSL. Participates in the regulation of hematopoietic stem cells during development and under homeostatic conditions by affecting their development, quiescence, and differentiation. This chain is Interferon gamma (Ifng), found in Mus musculus (Mouse).